We begin with the raw amino-acid sequence, 225 residues long: Transcription factor HES-7 (225 aa).

One can recognise a bHLH domain in the interval 12–69; it reads GPKMLKPLVEKRRRDRINRSLEELRLLLLERTRDQNLRNPKLEKAEILEFAVGYLRER. One can recognise an Orange domain in the interval 92 to 122; it reads YLSGFRECLLRLAAFAHDASPAARSQLFSAL. The segment at 124 to 225 is disordered; the sequence is GYRRPKPPRP…PPPAFWRPWP (102 aa). Pro residues-rich tracts occupy residues 140-149 and 213-225; these read LPAPRPPLDP and PSLP…RPWP. The short motif at 221-224 is the WRPW motif element; it reads WRPW.

As to quaternary structure, transcription repression requires formation of a complex with a corepressor protein of the Groucho/TLE family.

The protein localises to the nucleus. Its function is as follows. Transcriptional repressor. Represses transcription from both N box- and E box-containing promoters. May with HES1, cooperatively regulate somite formation in the presomitic mesoderm (PSM). May function as a segmentation clock, which is essential for coordinated somite segmentation. In Mus musculus (Mouse), this protein is Transcription factor HES-7 (Hes7).